Consider the following 1687-residue polypeptide: A-kinase anchor protein 12 (1687 aa).

Residues 1-108 (MGAGSSTEQR…EKDRVEEMAA (108 aa)) form a disordered region. Residue Gly-2 is the site of N-myristoyl glycine attachment. Ser-11, Ser-18, Ser-22, and Ser-27 each carry phosphoserine. Residues 30–48 (GPAAEASGAAGDPADADPA) show a composition bias toward low complexity. Polar residues predominate over residues 52-62 (PQKNGQLSTVN). Over residues 75 to 88 (ENQEGQEEEVVDED) the composition is skewed to acidic residues. Residues 89-105 (VGQRESEDVREKDRVEE) show a composition bias toward basic and acidic residues. Phosphoserine is present on residues Ser-136 and Ser-204. Disordered stretches follow at residues 175–282 (SDTV…ETTS) and 298–355 (KTSF…DYEK). Residues 213–230 (ASKESELKQSTEKQEGTL) show a composition bias toward basic and acidic residues. Phosphoserine is present on residues Ser-235 and Ser-245. The span at 247–259 (QAAEEEAKDEGEE) shows a compositional bias: acidic residues. An involved in PKC-binding region spans residues 254-544 (KDEGEEKQEK…QHIHTESPES (291 aa)). A phosphoserine mark is found at Ser-268, Ser-271, Ser-274, and Ser-304. The segment covering 268–282 (SPESPSSPVSSETTS) has biased composition (low complexity). Residues 303–321 (KSKEDDLETAEKRKEQEAE) are compositionally biased toward basic and acidic residues. Residue Thr-331 is modified to Phosphothreonine. Positions 334-344 (ASEEQEPAEDT) are enriched in acidic residues. Ser-335 and Ser-350 each carry phosphoserine. Phosphotyrosine is present on Tyr-353. Position 371 is a phosphoserine (Ser-371). Positions 402–481 (VEKTEEEQGG…EKTLPKHPEG (80 aa)) are disordered. Residues 417-426 (GGVVVEGTGE) show a composition bias toward low complexity. Ser-469 bears the Phosphoserine mark. Over residues 470-480 (PEEKTLPKHPE) the composition is skewed to basic and acidic residues. Residues Ser-491, Ser-507, and Ser-509 each carry the phosphoserine modification. Positions 496-828 (KVQGSPLKKL…INEDDPDVPA (333 aa)) are disordered. A compositionally biased stretch (low complexity) spans 499–513 (GSPLKKLFSSSGLKK). Basic residues predominate over residues 514 to 523 (LSGKKQKGKR). Basic and acidic residues predominate over residues 533 to 550 (EYQHIHTESPESADEQKG). Ser-541, Ser-544, Ser-585, Ser-599, Ser-614, and Ser-616 each carry phosphoserine. The short motif at 594–614 (ITPWASFKKMVTPKKRVRRPS) is the AKAP CaM-binding 1 element. The segment covering 612-626 (RPSESDKEEELEKVK) has biased composition (basic and acidic residues). Polar residues predominate over residues 628–639 (ATLSSTDSTVSE). A Phosphothreonine modification is found at Thr-629. Phosphoserine occurs at positions 631, 632, 635, and 638. The span at 642 to 661 (DEVKTVGEEQKPEEPKRRVD) shows a compositional bias: basic and acidic residues. Ser-683, Ser-684, and Ser-685 each carry phosphoserine. Positions 697–711 (DSHRAEEASKDKEAG) are enriched in basic and acidic residues. Over residues 717–726 (ASTQEQDQAQ) the composition is skewed to polar residues. The segment covering 727 to 744 (GSSSPEPAGSPSEGEGVS) has biased composition (low complexity). Phosphoserine occurs at positions 736, 748, 770, 771, and 789. The AKAP CaM-binding 2 motif lies at 743–763 (VSTWESFKRLVTPRKKSKSKL). The short motif at 784–804 (EESWVSIKKFIPGRRKKRADG) is the AKAP CaM-binding 3 element. The residue at position 871 (Thr-871) is a Phosphothreonine. Phosphoserine is present on Ser-873. The segment at 959-981 (ETSEALRTEEVTEASGAEETTDM) is disordered. Lys-1030 participates in a covalent cross-link: Glycyl lysine isopeptide (Lys-Gly) (interchain with G-Cter in SUMO1). A compositionally biased stretch (polar residues) spans 1035–1045 (VPATQTVQRTG). Disordered regions lie at residues 1035–1105 (VPAT…EVTA), 1125–1221 (AVAP…LAAA), 1277–1361 (CQEK…QDKA), and 1443–1487 (TPAP…TAIE). Position 1059 is a phosphoserine (Ser-1059). Over residues 1130–1157 (SSETLTDSETNGSTPLADSDTADGTQQD) the composition is skewed to polar residues. Positions 1199–1211 (QEEHGEEPGRDVL) are enriched in basic and acidic residues. At Ser-1289 the chain carries Phosphoserine. Basic and acidic residues predominate over residues 1298-1310 (DVEKEKRETKPEQ). Residues Ser-1348, Ser-1352, and Ser-1354 each carry the phosphoserine modification. Basic and acidic residues predominate over residues 1462–1487 (QRERSEEEDKPDAGPDADGKESTAIE). The tract at residues 1498–1511 (ELESKSNKIVLNVI) is RII-binding. 2 disordered regions span residues 1522–1582 (ETAP…GSAS) and 1599–1687 (IEKL…LAES). Residues 1530 to 1547 (YDSQTQVPAMQADSQGAQ) are compositionally biased toward polar residues. Residues Ser-1543 and Ser-1571 each carry the phosphoserine modification. The span at 1618–1630 (QLQSLAQAEASAS) shows a compositional bias: low complexity. The residue at position 1637 (Ser-1637) is a Phosphoserine. A compositionally biased stretch (basic and acidic residues) spans 1645–1687 (LTEEGDAPKVEVQEEEMSTKSVKENKAQAEEDLQEPKGDLAES).

As to quaternary structure, binds to dimeric RII-alpha regulatory subunit of PKC. Phosphorylated by PKC (in vitro).

It localises to the cytoplasm. It is found in the cytoskeleton. The protein localises to the membrane. In terms of biological role, anchoring protein that mediates the subcellular compartmentation of protein kinase A (PKA) and protein kinase C (PKC). The chain is A-kinase anchor protein 12 (Akap12) from Rattus norvegicus (Rat).